The following is a 520-amino-acid chain: Protein-export membrane protein SecD (520 aa).

6 helical membrane passes run 10–30 (IILL…PTLA), 364–384 (DSLL…FLRY), 391–411 (LPMI…AAGI), 417–437 (LSVI…LVII), 461–481 (FWVI…LAIL), and 483–503 (LGDL…GVLI).

Belongs to the SecD/SecF family. SecD subfamily. In terms of assembly, part of the protein translocation apparatus. Forms a complex with SecF.

It is found in the cell membrane. In terms of biological role, involved in protein export. The chain is Protein-export membrane protein SecD from Haloquadratum walsbyi (strain DSM 16790 / HBSQ001).